Consider the following 252-residue polypeptide: Imidazole glycerol phosphate synthase subunit HisF (252 aa).

Residues Asp11 and Asp130 contribute to the active site.

Belongs to the HisA/HisF family. Heterodimer of HisH and HisF.

It is found in the cytoplasm. The catalysed reaction is 5-[(5-phospho-1-deoxy-D-ribulos-1-ylimino)methylamino]-1-(5-phospho-beta-D-ribosyl)imidazole-4-carboxamide + L-glutamine = D-erythro-1-(imidazol-4-yl)glycerol 3-phosphate + 5-amino-1-(5-phospho-beta-D-ribosyl)imidazole-4-carboxamide + L-glutamate + H(+). The protein operates within amino-acid biosynthesis; L-histidine biosynthesis; L-histidine from 5-phospho-alpha-D-ribose 1-diphosphate: step 5/9. IGPS catalyzes the conversion of PRFAR and glutamine to IGP, AICAR and glutamate. The HisF subunit catalyzes the cyclization activity that produces IGP and AICAR from PRFAR using the ammonia provided by the HisH subunit. The sequence is that of Imidazole glycerol phosphate synthase subunit HisF from Lacticaseibacillus paracasei (strain ATCC 334 / BCRC 17002 / CCUG 31169 / CIP 107868 / KCTC 3260 / NRRL B-441) (Lactobacillus paracasei).